A 300-amino-acid chain; its full sequence is Enoyl-CoA hydratase domain-containing protein 3, mitochondrial (300 aa).

The transit peptide at 1 to 66 directs the protein to the mitochondrion; sequence MAVVAGLRAF…RNIVLSNPRR (66 aa). Positions 34–53 are disordered; the sequence is GSAGPAGSESEPRLTSTRQQ. Lys110 is subject to N6-succinyllysine.

The protein belongs to the enoyl-CoA hydratase/isomerase family.

Its subcellular location is the mitochondrion. Functionally, may play a role in fatty acid biosynthesis and insulin sensitivity. In Mus musculus (Mouse), this protein is Enoyl-CoA hydratase domain-containing protein 3, mitochondrial.